A 650-amino-acid chain; its full sequence is Threonine--tRNA ligase (650 aa).

In terms of domain architecture, TGS spans 1–61 (MIKITFPDGA…DEDGTLEIVM (61 aa)). Residues 242–540 (DHRKLGKELD…LIETYKGAFP (299 aa)) form a catalytic region. Positions 336, 387, and 517 each coordinate Zn(2+).

Belongs to the class-II aminoacyl-tRNA synthetase family. In terms of assembly, homodimer. Zn(2+) serves as cofactor.

The protein localises to the cytoplasm. The catalysed reaction is tRNA(Thr) + L-threonine + ATP = L-threonyl-tRNA(Thr) + AMP + diphosphate + H(+). Its function is as follows. Catalyzes the attachment of threonine to tRNA(Thr) in a two-step reaction: L-threonine is first activated by ATP to form Thr-AMP and then transferred to the acceptor end of tRNA(Thr). Also edits incorrectly charged L-seryl-tRNA(Thr). In Streptococcus suis (strain 98HAH33), this protein is Threonine--tRNA ligase.